Consider the following 669-residue polypeptide: Collagen alpha-1(II) chain (669 aa).

4-hydroxyproline occurs at positions 3 and 12. Positions 318–327 (XXXXXXXGAP) are enriched in low complexity. 3 disordered regions span residues 318 to 360 (XXXX…XXXX), 405 to 438 (XXXX…XXXX), and 638 to 669 (XXGF…AGPR). Proline 336 and proline 345 each carry 4-hydroxyproline. Composition is skewed to low complexity over residues 339-360 (AGFA…XXXX) and 405-420 (XXXX…NGNP). Residue proline 413 is modified to 3-hydroxyproline. A 4-hydroxyproline mark is found at proline 414, proline 420, and proline 426. Composition is skewed to low complexity over residues 429-438 (AGKXXXXXXX) and 638-647 (XXGFTGLQGL). A 4-hydroxyproline modification is found at proline 648. Proline 650 is modified (3-hydroxyproline).

It belongs to the fibrillar collagen family. Homotrimers of alpha 1(II) chains. Post-translationally, contains mostly 4-hydroxyproline. Prolines at the third position of the tripeptide repeating unit (G-X-P) are 4-hydroxylated in some or all of the chains. In terms of processing, contains 3-hydroxyproline at a few sites. This modification occurs on the first proline residue in the sequence motif Gly-Pro-Hyp, where Hyp is 4-hydroxyproline.

The protein localises to the secreted. Its subcellular location is the extracellular space. The protein resides in the extracellular matrix. Type II collagen is specific for cartilaginous tissues. It is essential for the normal embryonic development of the skeleton, for linear growth and for the ability of cartilage to resist compressive forces. In Mammut americanum (American mastodon), this protein is Collagen alpha-1(II) chain.